An 856-amino-acid chain; its full sequence is Phosphatidylglycerol lysyltransferase (856 aa).

The next 13 helical transmembrane spans lie at Ala7–Ser27, Leu51–Val71, Val88–Gly108, Ile128–Ala148, Pro161–Ser181, Ser208–Ile228, Val235–Phe255, Ile280–Ala300, Ser342–Ile362, Ala375–Ile395, Phe420–Val440, Ile459–Ile479, and His501–Tyr521.

The protein belongs to the LPG synthase family.

It localises to the cell membrane. The catalysed reaction is L-lysyl-tRNA(Lys) + a 1,2-diacyl-sn-glycero-3-phospho-(1'-sn-glycerol) = a 1,2-diacyl-sn-glycero-3-phospho-1'-(3'-O-L-lysyl)-sn-glycerol + tRNA(Lys). Its function is as follows. Catalyzes the transfer of a lysyl group from L-lysyl-tRNA(Lys) to membrane-bound phosphatidylglycerol (PG), which produces lysylphosphatidylglycerol (LPG), one of the components of the bacterial membrane with a positive net charge. LPG synthesis contributes to the resistance to cationic antimicrobial peptides (CAMPs) and likely protects B.subtilis against its own CAMPs and against those produced by competiting microorganisms (bacteriocins). In fact, the modification of anionic phosphatidylglycerol with positively charged L-lysine results in repulsion of the peptides. The polypeptide is Phosphatidylglycerol lysyltransferase (mprF) (Bacillus subtilis (strain 168)).